A 431-amino-acid chain; its full sequence is Enolase (431 aa).

Position 166 (glutamine 166) interacts with (2R)-2-phosphoglycerate. Glutamate 208 serves as the catalytic Proton donor. Mg(2+) contacts are provided by aspartate 245, glutamate 288, and aspartate 315. Residues lysine 340, arginine 369, serine 370, and lysine 391 each coordinate (2R)-2-phosphoglycerate. The Proton acceptor role is filled by lysine 340.

The protein belongs to the enolase family. It depends on Mg(2+) as a cofactor.

It localises to the cytoplasm. The protein localises to the secreted. It is found in the cell surface. It carries out the reaction (2R)-2-phosphoglycerate = phosphoenolpyruvate + H2O. It participates in carbohydrate degradation; glycolysis; pyruvate from D-glyceraldehyde 3-phosphate: step 4/5. Catalyzes the reversible conversion of 2-phosphoglycerate (2-PG) into phosphoenolpyruvate (PEP). It is essential for the degradation of carbohydrates via glycolysis. In Clostridium perfringens (strain ATCC 13124 / DSM 756 / JCM 1290 / NCIMB 6125 / NCTC 8237 / Type A), this protein is Enolase.